The sequence spans 427 residues: MNRNEILFDRAKAVIPGGVNSPVRAFGSVGGVPRFIKKAEGAYVWDENGTRYTDYVGSWGPAIVGHAHPEVIEAVREAALGGLSFGAPTEGEIAIAEEIAKIMPSVERLRLVSSGTEATMTAIRLARGFTGRDKIIKFEGCYHGHSDSLLVKAGSGLLTFGNPSSAGVPADFTKHTLVLEYNNIAQLEEAFAQSGNDIACVILEPFVGNMNLVRPSEAFVKALRELTEKHGAVLIYDEVMTGFRVALGGAQSLHGITPDLTTMGKVIGGGMPLAAFGGRKDIMECISPLGGVYQAGTLSGNPIAVAAGLKTLEIIRREGFYENLTARTEQLVQGFRTAADAAGIEFTADSVGGMFGLYFAAHAPRNYADMARSNIEGFKQFFHGMLDRGIAFGPSAYEAGFVSAAHTPELIDETVAVAVEVFKAMAA.

K265 is subject to N6-(pyridoxal phosphate)lysine.

The protein belongs to the class-III pyridoxal-phosphate-dependent aminotransferase family. HemL subfamily. Homodimer. Pyridoxal 5'-phosphate serves as cofactor.

The protein localises to the cytoplasm. The enzyme catalyses (S)-4-amino-5-oxopentanoate = 5-aminolevulinate. It functions in the pathway porphyrin-containing compound metabolism; protoporphyrin-IX biosynthesis; 5-aminolevulinate from L-glutamyl-tRNA(Glu): step 2/2. The chain is Glutamate-1-semialdehyde 2,1-aminomutase from Neisseria meningitidis serogroup A / serotype 4A (strain DSM 15465 / Z2491).